The sequence spans 340 residues: Glycerol-3-phosphate dehydrogenase [NAD(P)+] (340 aa).

NADPH is bound by residues S15, Y16, H36, and K110. Sn-glycerol 3-phosphate is bound by residues K110, G139, and T141. A143 is a binding site for NADPH. Positions 196, 249, 259, 260, and 261 each coordinate sn-glycerol 3-phosphate. K196 functions as the Proton acceptor in the catalytic mechanism. Residue R260 participates in NADPH binding. Positions 284 and 286 each coordinate NADPH.

The protein belongs to the NAD-dependent glycerol-3-phosphate dehydrogenase family.

It localises to the cytoplasm. The enzyme catalyses sn-glycerol 3-phosphate + NAD(+) = dihydroxyacetone phosphate + NADH + H(+). The catalysed reaction is sn-glycerol 3-phosphate + NADP(+) = dihydroxyacetone phosphate + NADPH + H(+). Its pathway is membrane lipid metabolism; glycerophospholipid metabolism. Catalyzes the reduction of the glycolytic intermediate dihydroxyacetone phosphate (DHAP) to sn-glycerol 3-phosphate (G3P), the key precursor for phospholipid synthesis. The sequence is that of Glycerol-3-phosphate dehydrogenase [NAD(P)+] from Serratia marcescens.